A 337-amino-acid chain; its full sequence is Cytoskeleton protein RodZ (337 aa).

The Cytoplasmic segment spans residues 1–111; sequence MNTEATHDQN…LGKRRKKRDG (111 aa). The HTH cro/C1-type domain maps to 19–71; sequence LRNAREQLGLSQQAVAERLCLKVSTVRDIEEDKAPADLASTFLRGYIRSYARL. The segment at residues 30 to 49 is a DNA-binding region (H-T-H motif); it reads QQAVAERLCLKVSTVRDIEE. A helical; Signal-anchor for type II membrane protein membrane pass occupies residues 112-132; it reads WLMTFTWLVLFVVIGLSGAWW. Topologically, residues 133 to 337 are periplasmic; the sequence is WQDHKAQQEE…TLNAEQSPAQ (205 aa). The span at 145-167 shows a compositional bias: polar residues; sequence TMADQSSAELSSNSEQGQSVPLN. Residues 145 to 236 are disordered; sequence TMADQSSAEL…TAATTPDGAA (92 aa). The span at 168–207 shows a compositional bias: low complexity; sequence TSTTTDPATTSTPPASVDTTATNTQTPVVTAPAPAVDPQQ. The segment covering 208-218 has biased composition (polar residues); the sequence is NAVVSPSQANV. A compositionally biased stretch (low complexity) spans 219 to 236; sequence DTAATPAPTAATTPDGAA.

This sequence belongs to the RodZ family.

The protein resides in the cell inner membrane. Cytoskeletal protein that is involved in cell-shape control through regulation of the length of the long axis. The protein is Cytoskeleton protein RodZ of Escherichia coli O157:H7.